Here is a 350-residue protein sequence, read N- to C-terminus: 4-hydroxythreonine-4-phosphate dehydrogenase (350 aa).

Residues H138 and T139 each contribute to the substrate site. Residues H173, H218, and H273 each coordinate a divalent metal cation. Substrate-binding residues include K281, N290, and R299.

This sequence belongs to the PdxA family. As to quaternary structure, homodimer. It depends on Zn(2+) as a cofactor. Requires Mg(2+) as cofactor. Co(2+) is required as a cofactor.

The protein resides in the cytoplasm. It catalyses the reaction 4-(phosphooxy)-L-threonine + NAD(+) = 3-amino-2-oxopropyl phosphate + CO2 + NADH. It functions in the pathway cofactor biosynthesis; pyridoxine 5'-phosphate biosynthesis; pyridoxine 5'-phosphate from D-erythrose 4-phosphate: step 4/5. Functionally, catalyzes the NAD(P)-dependent oxidation of 4-(phosphooxy)-L-threonine (HTP) into 2-amino-3-oxo-4-(phosphooxy)butyric acid which spontaneously decarboxylates to form 3-amino-2-oxopropyl phosphate (AHAP). The polypeptide is 4-hydroxythreonine-4-phosphate dehydrogenase (Xanthobacter autotrophicus (strain ATCC BAA-1158 / Py2)).